The following is a 386-amino-acid chain: Probable zinc transporter zrg17 (386 aa).

Transmembrane regions (helical) follow at residues 102-122 (ILFF…ILLT), 128-148 (IVEG…SFLV), 163-183 (MELL…MNLL), 208-228 (VHIH…FALL), 243-263 (FFHG…SLGY), and 268-288 (FLSH…GFSI).

This sequence belongs to the cation diffusion facilitator (CDF) transporter (TC 2.A.4) family. SLC30A subfamily. Interacts with cis4.

The protein resides in the cytoplasm. Its subcellular location is the nucleus membrane. In terms of biological role, probable transporter involved in the regulation of zinc homeostasis. The sequence is that of Probable zinc transporter zrg17 (zrg17) from Schizosaccharomyces pombe (strain 972 / ATCC 24843) (Fission yeast).